The primary structure comprises 154 residues: SsrA-binding protein (154 aa).

Positions 123 to 142 (AEHDKRHTIKDRDWQREQGR) are enriched in basic and acidic residues. The tract at residues 123-154 (AEHDKRHTIKDRDWQREQGRLMRHKVSAPHKD) is disordered. Over residues 143–154 (LMRHKVSAPHKD) the composition is skewed to basic residues.

This sequence belongs to the SmpB family.

The protein localises to the cytoplasm. Required for rescue of stalled ribosomes mediated by trans-translation. Binds to transfer-messenger RNA (tmRNA), required for stable association of tmRNA with ribosomes. tmRNA and SmpB together mimic tRNA shape, replacing the anticodon stem-loop with SmpB. tmRNA is encoded by the ssrA gene; the 2 termini fold to resemble tRNA(Ala) and it encodes a 'tag peptide', a short internal open reading frame. During trans-translation Ala-aminoacylated tmRNA acts like a tRNA, entering the A-site of stalled ribosomes, displacing the stalled mRNA. The ribosome then switches to translate the ORF on the tmRNA; the nascent peptide is terminated with the 'tag peptide' encoded by the tmRNA and targeted for degradation. The ribosome is freed to recommence translation, which seems to be the essential function of trans-translation. This is SsrA-binding protein from Leptothrix cholodnii (strain ATCC 51168 / LMG 8142 / SP-6) (Leptothrix discophora (strain SP-6)).